Here is a 794-residue protein sequence, read N- to C-terminus: Copper-exporting P-type ATPase (794 aa).

HMA domains are found at residues Thr-4 to Ala-69 and Glu-71 to Glu-137. The Cu(+) site is built by Cys-15, Cys-18, Cys-82, and Cys-85. 6 helical membrane-spanning segments follow: residues Ile-161–Ile-181, Ile-186–Trp-206, Val-225–Trp-245, Leu-255–Ala-275, Tyr-410–Val-430, and Pro-437–Ala-457. Residue Asp-494 is the 4-aspartylphosphate intermediate of the active site. Residues Asp-689 and Asp-693 each contribute to the Mg(2+) site. 2 consecutive transmembrane segments (helical) span residues Leu-747–Ala-767 and Ala-773–Leu-789.

The protein belongs to the cation transport ATPase (P-type) (TC 3.A.3) family. Type IB subfamily.

The protein resides in the cell membrane. The catalysed reaction is Cu(+)(in) + ATP + H2O = Cu(+)(out) + ADP + phosphate + H(+). In terms of biological role, involved in copper export. The chain is Copper-exporting P-type ATPase (copA) from Staphylococcus epidermidis (strain ATCC 35984 / DSM 28319 / BCRC 17069 / CCUG 31568 / BM 3577 / RP62A).